The sequence spans 1316 residues: Tetratricopeptide repeat protein 21B (1316 aa).

TPR repeat units lie at residues 108–141 (EKAL…SDGS), 145–178 (HVLK…GNDT), 180–211 (ALLG…FPSF), 285–323 (AQLF…NPQQ), 324–357 (SEFA…DETS), 492–525 (LQTV…NPSY), 563–596 (PLYH…PGMK), 617–650 (LSIF…FSGT), 722–755 (PRSF…NPKD), 757–789 (TLAS…GQKN), 791–822 (LCYD…EPVN), 831–864 (GRCQ…QARV), 884–917 (AEIC…CETD), 919–951 (KIML…DQDN), 952–985 (EAAT…KPDN), 1023–1056 (PGFQ…RDWG), 1197–1230 (EKSW…NRSC), 1232–1264 (KAYE…SNRT), and 1266–1299 (PAVG…HPTY).

This sequence belongs to the TTC21 family. Component of the IFT complex A (IFT-A) complex. IFT-A complex is divided into a core subcomplex composed of IFT122:IFT140:WDR19 which is associated with TULP3 and a peripheral subcomplex composed of IFT43:WDR35:TTC21B. Interacts directy with WDR35 and TTC21B. Interacts with TTC25.

It is found in the cytoplasm. It localises to the cytoskeleton. The protein resides in the cilium axoneme. In terms of biological role, component of the IFT complex A (IFT-A), a complex required for retrograde ciliary transport and entry into cilia of G protein-coupled receptors (GPCRs). Essential for retrograde trafficking of IFT-1, IFT-B and GPCRs. Negatively modulates the SHH signal transduction. This chain is Tetratricopeptide repeat protein 21B, found in Homo sapiens (Human).